A 411-amino-acid chain; its full sequence is Envelope glycoprotein G (411 aa).

Residues 1-19 form the signal peptide; that stretch reads MLTVLAALSLLSLLTSATG. N-linked (GlcNAc...) asparagine; by host glycans are attached at residues asparagine 83, asparagine 138, asparagine 222, asparagine 245, and asparagine 317. Polar residues-rich tracts occupy residues 306 to 327 and 334 to 345; these read VPSS…SNSP and SVNSDDSTHTGG. The interval 306 to 345 is disordered; that stretch reads VPSSAAESSLENQSTQEESNSPEVAHLRSVNSDDSTHTGG. The helical transmembrane segment at 364–384 threads the bilayer; that stretch reads LALIGLGTCAMIGLIVYICVL.

This sequence belongs to the alphaherpesvirinae glycoprotein G family.

The protein resides in the virion membrane. Chemokine-binding protein that inhibits neutrophils' chemotaxis. In Equine herpesvirus 1 (strain Kentucky A) (EHV-1), this protein is Envelope glycoprotein G (gG).